We begin with the raw amino-acid sequence, 828 residues long: Periplasmic nitrate reductase 1 (828 aa).

Residues 1–30 (MKMTRRAFVKANAAASAAAVAGITLPASAA) constitute a signal peptide (tat-type signal). The 4Fe-4S Mo/W bis-MGD-type domain occupies 41–97 (IKWDKAPCRFCGTGCSVLVGTQNGRVVATQGDPEAPVNKGLNCIKGYFLSKIMYGKD). [4Fe-4S] cluster contacts are provided by C48, C51, C55, and C83. Residues K85, Q152, N177, C181, 214 to 221 (WGSNMAEM), 245 to 249 (STYYH), 264 to 266 (QTD), M374, Q378, N484, 510 to 511 (SD), K533, D560, and 718 to 727 (TGRVLEHWHT) contribute to the Mo-bis(molybdopterin guanine dinucleotide) site. F794 lines the substrate pocket. Mo-bis(molybdopterin guanine dinucleotide) is bound by residues N802 and K819.

It belongs to the prokaryotic molybdopterin-containing oxidoreductase family. NasA/NapA/NarB subfamily. As to quaternary structure, component of the periplasmic nitrate reductase NapAB complex composed of NapA and NapB. Requires [4Fe-4S] cluster as cofactor. Mo-bis(molybdopterin guanine dinucleotide) serves as cofactor. Predicted to be exported by the Tat system. The position of the signal peptide cleavage has not been experimentally proven.

The protein resides in the periplasm. It carries out the reaction 2 Fe(II)-[cytochrome] + nitrate + 2 H(+) = 2 Fe(III)-[cytochrome] + nitrite + H2O. Functionally, catalytic subunit of the periplasmic nitrate reductase complex NapAB. Receives electrons from NapB and catalyzes the reduction of nitrate to nitrite. The chain is Periplasmic nitrate reductase 1 from Photobacterium profundum (strain SS9).